Here is a 529-residue protein sequence, read N- to C-terminus: Pre-rRNA-processing protein pro-1 (529 aa).

WD repeat units follow at residues 136 to 175 (AHYQ…SADR) and 287 to 326 (GHSD…CLKV). The stretch at 416-518 (ARNEAAKAEK…LKEINKQMYE (103 aa)) forms a coiled coil. Residues 436 to 470 (TLGDDEDDAPEVGNQRRKSGKKNKKNRKNQKKNDF) form a disordered region. Over residues 450-465 (QRRKSGKKNKKNRKNQ) the composition is skewed to basic residues.

The protein belongs to the WD repeat IPI3/WDR18 family. In terms of assembly, component of the PELP1 complex, composed of at least PELP1, TEX10 and WDR18. The complex interacts with pre-60S ribosome particles.

It localises to the nucleus. Its subcellular location is the nucleolus. The protein resides in the nucleoplasm. Functionally, component of the PELP1 complex involved in the nucleolar steps of 28S rRNA maturation and the subsequent nucleoplasmic transit of the pre-60S ribosomal subunit. Required for processing ITS2 sequences from rRNA intermediates during 26S rRNA maturation. Required in the soma to promote normal proliferation and prevent germline tumor formation. This chain is Pre-rRNA-processing protein pro-1, found in Caenorhabditis elegans.